Here is a 505-residue protein sequence, read N- to C-terminus: ATP synthase subunit alpha, cyanelle (505 aa).

An ATP-binding site is contributed by 170-177 (GDRQTGKT).

The protein belongs to the ATPase alpha/beta chains family. As to quaternary structure, F-type ATPases have 2 components, CF(1) - the catalytic core - and CF(0) - the membrane proton channel. CF(1) has five subunits: alpha(3), beta(3), gamma(1), delta(1), epsilon(1). CF(0) has four main subunits: a, b, b' and c.

It is found in the plastid. The protein localises to the cyanelle thylakoid membrane. It carries out the reaction ATP + H2O + 4 H(+)(in) = ADP + phosphate + 5 H(+)(out). In terms of biological role, produces ATP from ADP in the presence of a proton gradient across the membrane. The alpha chain is a regulatory subunit. This is ATP synthase subunit alpha, cyanelle from Cyanophora paradoxa.